Here is a 220-residue protein sequence, read N- to C-terminus: Deoxyribose-phosphate aldolase (220 aa).

The active-site Proton donor/acceptor is the aspartate 89. The active-site Schiff-base intermediate with acetaldehyde is lysine 151. Lysine 180 (proton donor/acceptor) is an active-site residue.

The protein belongs to the DeoC/FbaB aldolase family. DeoC type 1 subfamily.

Its subcellular location is the cytoplasm. The catalysed reaction is 2-deoxy-D-ribose 5-phosphate = D-glyceraldehyde 3-phosphate + acetaldehyde. The protein operates within carbohydrate degradation; 2-deoxy-D-ribose 1-phosphate degradation; D-glyceraldehyde 3-phosphate and acetaldehyde from 2-deoxy-alpha-D-ribose 1-phosphate: step 2/2. Catalyzes a reversible aldol reaction between acetaldehyde and D-glyceraldehyde 3-phosphate to generate 2-deoxy-D-ribose 5-phosphate. In Staphylococcus carnosus (strain TM300), this protein is Deoxyribose-phosphate aldolase.